A 94-amino-acid polypeptide reads, in one-letter code: DNA-directed RNA polymerase subunit Rpo11 (94 aa).

It belongs to the archaeal Rpo11/eukaryotic RPB11/RPC19 RNA polymerase subunit family. In terms of assembly, part of the RNA polymerase complex.

Its subcellular location is the cytoplasm. The catalysed reaction is RNA(n) + a ribonucleoside 5'-triphosphate = RNA(n+1) + diphosphate. Its function is as follows. DNA-dependent RNA polymerase (RNAP) catalyzes the transcription of DNA into RNA using the four ribonucleoside triphosphates as substrates. This Natronomonas pharaonis (strain ATCC 35678 / DSM 2160 / CIP 103997 / JCM 8858 / NBRC 14720 / NCIMB 2260 / Gabara) (Halobacterium pharaonis) protein is DNA-directed RNA polymerase subunit Rpo11.